The primary structure comprises 37 residues: Desulforedoxin (37 aa).

The Fe cation site is built by Cys10, Cys13, Cys29, and Cys30.

It to the N-terminal section of desulfoferrodoxin. As to quaternary structure, homodimer. Fe cation is required as a cofactor.

Nonheme iron protein possibly involved in electron transport. In Megalodesulfovibrio gigas (Desulfovibrio gigas), this protein is Desulforedoxin (dsr).